The primary structure comprises 293 residues: Undecaprenyl-diphosphatase (293 aa).

7 helical membrane-spanning segments follow: residues 57–77 (PGVS…IVYF), 106–126 (LAIA…KLFW), 134–154 (IRSL…LALA), 172–192 (GFVV…RSGS), 212–232 (FLLG…DAFA), 239–259 (VLPL…AIDW), and 268–288 (STWI…AWWL).

This sequence belongs to the UppP family.

The protein resides in the cell inner membrane. It catalyses the reaction di-trans,octa-cis-undecaprenyl diphosphate + H2O = di-trans,octa-cis-undecaprenyl phosphate + phosphate + H(+). Its function is as follows. Catalyzes the dephosphorylation of undecaprenyl diphosphate (UPP). Confers resistance to bacitracin. This chain is Undecaprenyl-diphosphatase, found in Prochlorococcus marinus (strain MIT 9303).